Consider the following 285-residue polypeptide: Methionine aminopeptidase 2 (285 aa).

His-114 is a binding site for substrate. Residues Asp-131, Asp-142, and His-205 each coordinate a divalent metal cation. A substrate-binding site is contributed by His-212. Positions 238 and 269 each coordinate a divalent metal cation.

In terms of assembly, monomer. Co(2+) is required as a cofactor. Requires Zn(2+) as cofactor. It depends on Mn(2+) as a cofactor. Fe(2+) serves as cofactor.

The enzyme catalyses Release of N-terminal amino acids, preferentially methionine, from peptides and arylamides.. Inhibited by bengamide derivatives and by various metalloform-selective inhibitors. In terms of biological role, removes the N-terminal methionine from nascent proteins. The N-terminal methionine is often cleaved when the second residue in the primary sequence is small and uncharged (Met-Ala-, Cys, Gly, Pro, Ser, Thr, or Val). Requires deformylation of the N(alpha)-formylated initiator methionine before it can be hydrolyzed. The sequence is that of Methionine aminopeptidase 2 from Mycobacterium tuberculosis (strain ATCC 25618 / H37Rv).